Consider the following 285-residue polypeptide: ATP synthase gamma chain (285 aa).

This sequence belongs to the ATPase gamma chain family. As to quaternary structure, F-type ATPases have 2 components, CF(1) - the catalytic core - and CF(0) - the membrane proton channel. CF(1) has five subunits: alpha(3), beta(3), gamma(1), delta(1), epsilon(1). CF(0) has three main subunits: a, b and c.

The protein localises to the cell membrane. In terms of biological role, produces ATP from ADP in the presence of a proton gradient across the membrane. The gamma chain is believed to be important in regulating ATPase activity and the flow of protons through the CF(0) complex. The polypeptide is ATP synthase gamma chain (Dehalococcoides mccartyi (strain CBDB1)).